The chain runs to 1868 residues: Inactive histone-lysine N-methyltransferase 2E (1868 aa).

The short motif at 63–66 is the HCFC1-binding motif (HBM) element; it reads DHNY. A PHD-type zinc finger spans residues 118–166; sequence VTRCICGFTHDDGYMICCDKCSVWQHIDCMGIDRQHIPDTYLCERCQPR. 8 residues coordinate Zn(2+): Cys121, Cys123, Cys135, Cys138, His143, Cys146, Cys160, and Cys163. Disordered regions lie at residues 178 to 197, 217 to 268, and 308 to 329; these read RRKRENMSDGDTSATESGDE, ASRV…SSDS, and GSGNDSKDMNKSELSTNNSLFR. The region spanning 330–447 is the SET domain; it reads PPVESHIQKN…KGTEITIAFD (118 aa). A glycan (O-linked (GlcNAc) serine) is linked at Ser435. An O-linked (GlcNAc) threonine glycan is attached at Thr440. The interval 472 to 504 is disordered; the sequence is KRSSESTENINSGYETRRKKGKKEKDTSKEKDI. A compositionally biased stretch (basic and acidic residues) spans 494 to 504; that stretch reads KEKDTSKEKDI. Residues 559–613 are a coiled coil; that stretch reads VEMESEEQIAERKRKMTREERKMEAILQAFARLEKREKRREQALERISTAKTEVK. Positions 646–670 are enriched in basic residues; that stretch reads NRTKQRKSFSRSRTHIGQQRRRHRT. Positions 646-682 are disordered; that stretch reads NRTKQRKSFSRSRTHIGQQRRRHRTVSMCSDIPPSSP. Residues Ser837 and Ser845 each carry the phosphoserine modification. The segment covering 884–908 has biased composition (low complexity); sequence YSESSTPTPSPYATPTHTDITPTDP. Disordered stretches follow at residues 884-924 and 1038-1068; these read YSES…ETYR and SMETPAHDRTEPSNQLDSTHSGRGTMYSSWV. A compositionally biased stretch (polar residues) spans 1049–1068; sequence PSNQLDSTHSGRGTMYSSWV. Residue Ser1070 is modified to Phosphoserine. Disordered regions lie at residues 1165–1222, 1236–1315, 1334–1565, and 1585–1842; these read KRQR…PPPA, SSEE…SNHI, PDAE…QNQQ, and VFTS…QASP. Residues 1184-1197 show a composition bias toward low complexity; that stretch reads SVSPHPSGSLSSSG. Positions 1203–1213 are enriched in polar residues; that stretch reads SSENGEQAENQ. Phosphoserine is present on Ser1282. Residues 1282 to 1291 show a composition bias toward basic and acidic residues; that stretch reads SDHRKDKDSG. Low complexity-rich tracts occupy residues 1294–1312 and 1348–1363; these read SPCVSCSPSHVQSPPSSHS and PSPDTSQSPSKTSKPG. A Phosphoserine modification is found at Ser1364. Composition is skewed to polar residues over residues 1389-1421, 1451-1463, and 1488-1498; these read ATVSEADNSVHQNPEPQHRQLSSNTPALSQNHA, HTENPPKSSTPHT, and SQSPQVGTPQR. Low complexity predominate over residues 1506–1518; it reads AAAQNLQANPQQA. The span at 1519–1547 shows a compositional bias: polar residues; that stretch reads TSGALFTQTPSGQSSATYSQFNQQSLNST. The segment covering 1548-1558 has biased composition (pro residues); the sequence is APPPPPPPPPS. The span at 1585 to 1603 shows a compositional bias: polar residues; it reads VFTSGPNQALPGSTSQQSV. A compositionally biased stretch (pro residues) spans 1631–1642; the sequence is VPPPPPPPPAPG. A compositionally biased stretch (polar residues) spans 1647–1656; the sequence is QQPSSHQQHS. Over residues 1682 to 1692 the composition is skewed to pro residues; the sequence is LPPPPPPPGPA. Over residues 1706 to 1716 the composition is skewed to polar residues; it reads QSLQAQHQHVV. Residues 1719–1732 show a composition bias toward pro residues; sequence APPPPPPPPPPPPA. A compositionally biased stretch (polar residues) spans 1806–1816; that stretch reads QGPNSIPTPTA.

It belongs to the class V-like SAM-binding methyltransferase superfamily. Histone-lysine methyltransferase family. TRX/MLL subfamily. As to quaternary structure, component of a complex composed of KMT2E, OGT and USP7; the complex stabilizes KMT2E, preventing KMT2E ubiquitination and proteasomal-mediated degradation. Interacts (via N-terminus) with OGT (via TRP repeats). Interacts with deubiquitinating enzyme USP7 (via MATH domain). Interacts (via HBM motif) with HCFC1 (via Kelch domain). Interacts with E2F1; the interaction is probably indirect and is mediated via HCFC1. Ubiquitinated. Deubiquitinated by USP7. Post-translationally, O-glycosylated at Ser-435 and Thr-440 in the SET domain by OGT which probably prevents KMT2E proteasomal-mediated degradation.

The protein resides in the chromosome. Its subcellular location is the cytoplasm. It localises to the cytoskeleton. The protein localises to the microtubule organizing center. It is found in the centrosome. The protein resides in the nucleus speckle. Its function is as follows. Associates with chromatin regions downstream of transcriptional start sites of active genes and thus regulates gene transcription. Chromatin interaction is mediated via the binding to tri-methylated histone H3 at 'Lys-4' (H3K4me3). Key regulator of hematopoiesis involved in terminal myeloid differentiation and in the regulation of hematopoietic stem cell (HSCs) self-renewal by a mechanism that involves DNA methylation. Also acts as an important cell cycle regulator, participating in cell cycle regulatory network machinery at multiple cell cycle stages including G1/S transition, S phase progression and mitotic entry. Recruited to E2F1 responsive promoters by HCFC1 where it stimulates tri-methylation of histone H3 at 'Lys-4' and transcriptional activation and thereby facilitates G1 to S phase transition. During myoblast differentiation, required to suppress inappropriate expression of S-phase-promoting genes and maintain expression of determination genes in quiescent cells. The chain is Inactive histone-lysine N-methyltransferase 2E (Kmt2e) from Mus musculus (Mouse).